The primary structure comprises 88 residues: Small ribosomal subunit protein uS17 (88 aa).

It belongs to the universal ribosomal protein uS17 family. In terms of assembly, part of the 30S ribosomal subunit.

In terms of biological role, one of the primary rRNA binding proteins, it binds specifically to the 5'-end of 16S ribosomal RNA. The polypeptide is Small ribosomal subunit protein uS17 (Azotobacter vinelandii (strain DJ / ATCC BAA-1303)).